A 156-amino-acid chain; its full sequence is Small ribosomal subunit protein uS7 (156 aa).

The protein belongs to the universal ribosomal protein uS7 family. Part of the 30S ribosomal subunit. Contacts proteins S9 and S11.

Functionally, one of the primary rRNA binding proteins, it binds directly to 16S rRNA where it nucleates assembly of the head domain of the 30S subunit. Is located at the subunit interface close to the decoding center, probably blocks exit of the E-site tRNA. The protein is Small ribosomal subunit protein uS7 of Neisseria meningitidis serogroup C (strain 053442).